Consider the following 255-residue polypeptide: 1-acyl-sn-glycerol-3-phosphate acyltransferase (255 aa).

The HXXXXD motif motif lies at 78–83 (HVSWLD).

Belongs to the 1-acyl-sn-glycerol-3-phosphate acyltransferase family.

Its subcellular location is the cell inner membrane. The catalysed reaction is a 1-acyl-sn-glycero-3-phosphate + an acyl-CoA = a 1,2-diacyl-sn-glycero-3-phosphate + CoA. The protein operates within phospholipid metabolism; CDP-diacylglycerol biosynthesis; CDP-diacylglycerol from sn-glycerol 3-phosphate: step 2/3. In terms of biological role, converts lysophosphatidic acid (LPA) into phosphatidic acid by incorporating acyl moiety at the 2 position. The polypeptide is 1-acyl-sn-glycerol-3-phosphate acyltransferase (plsC) (Neisseria gonorrhoeae).